A 265-amino-acid chain; its full sequence is Small ribosomal subunit protein eS4 (265 aa).

An S4 RNA-binding domain is found at 42 to 104 (LPLILIIRNR…TNENYRLLYD (63 aa)).

The protein belongs to the eukaryotic ribosomal protein eS4 family.

Its subcellular location is the cytoplasm. This is Small ribosomal subunit protein eS4 (RPS4) from Zea mays (Maize).